Here is a 380-residue protein sequence, read N- to C-terminus: Succinyl-diaminopimelate desuccinylase (380 aa).

Residue His68 coordinates Zn(2+). Asp70 is a catalytic residue. Asp101 serves as a coordination point for Zn(2+). The active-site Proton acceptor is Glu135. Residues Glu136, Glu164, and His350 each contribute to the Zn(2+) site.

The protein belongs to the peptidase M20A family. DapE subfamily. In terms of assembly, homodimer. Zn(2+) serves as cofactor. Requires Co(2+) as cofactor.

The enzyme catalyses N-succinyl-(2S,6S)-2,6-diaminopimelate + H2O = (2S,6S)-2,6-diaminopimelate + succinate. The protein operates within amino-acid biosynthesis; L-lysine biosynthesis via DAP pathway; LL-2,6-diaminopimelate from (S)-tetrahydrodipicolinate (succinylase route): step 3/3. Catalyzes the hydrolysis of N-succinyl-L,L-diaminopimelic acid (SDAP), forming succinate and LL-2,6-diaminopimelate (DAP), an intermediate involved in the bacterial biosynthesis of lysine and meso-diaminopimelic acid, an essential component of bacterial cell walls. This is Succinyl-diaminopimelate desuccinylase from Tolumonas auensis (strain DSM 9187 / NBRC 110442 / TA 4).